The chain runs to 518 residues: Lysine--tRNA ligase (518 aa).

The Mg(2+) site is built by E407 and E414.

It belongs to the class-II aminoacyl-tRNA synthetase family. Homodimer. The cofactor is Mg(2+).

The protein localises to the cytoplasm. The enzyme catalyses tRNA(Lys) + L-lysine + ATP = L-lysyl-tRNA(Lys) + AMP + diphosphate. This Helicobacter hepaticus (strain ATCC 51449 / 3B1) protein is Lysine--tRNA ligase.